The primary structure comprises 145 residues: Large ribosomal subunit protein bL9 (145 aa).

Belongs to the bacterial ribosomal protein bL9 family.

Its function is as follows. Binds to the 23S rRNA. This is Large ribosomal subunit protein bL9 from Ureaplasma urealyticum serovar 10 (strain ATCC 33699 / Western).